The chain runs to 471 residues: Putative multidrug resistance protein MdtD (471 aa).

Residues 1–11 lie on the Periplasmic side of the membrane; sequence MTDLPDSTRWQ. The helical transmembrane segment at 12–32 threads the bilayer; it reads LWIVAFGFFMQSLDTTIVNTA. The Cytoplasmic portion of the chain corresponds to 33-48; that stretch reads LPSMAQSLGESPLHMH. A helical transmembrane segment spans residues 49–69; sequence MVIVSYVLTVAVMLPASGWLA. Topologically, residues 70-76 are periplasmic; sequence DKVGVRN. A helical membrane pass occupies residues 77-97; that stretch reads IFFTAIVLFTLGSLFCALSGT. Residues 98 to 101 lie on the Cytoplasmic side of the membrane; it reads LNEL. Residues 102–124 form a helical membrane-spanning segment; the sequence is LLARALQGVGGAMMVPVGRLTVM. Topologically, residues 125–137 are periplasmic; the sequence is KIVPREQYMAAMT. A helical membrane pass occupies residues 138-158; the sequence is FVTLPGQIGPLLGPALGGLLV. The Cytoplasmic segment spans residues 159 to 164; it reads EYASWH. The chain crosses the membrane as a helical span at residues 165 to 185; it reads WIFLINIPVGIIGAIATLMLM. The Periplasmic segment spans residues 186–196; that stretch reads PNYTMQTRRFD. The helical transmembrane segment at 197-217 threads the bilayer; it reads LSGFLLLAVGMAVLTLALDGS. Topologically, residues 218-224 are cytoplasmic; sequence KGTGFSP. A helical transmembrane segment spans residues 225–245; sequence LAIAGLVAVGVVALVLYLLHA. Residues 246–262 lie on the Periplasmic side of the membrane; the sequence is QNNNRALFSLKLFRTRT. A helical membrane pass occupies residues 263–283; the sequence is FSLGLAGSFAGRIGSGMLPFM. The Cytoplasmic portion of the chain corresponds to 284-285; it reads TP. Residues 286–306 form a helical membrane-spanning segment; that stretch reads VFLQIGLGFSPFHAGLMMIPM. At 307 to 341 the chain is on the periplasmic side; the sequence is VLGSMGMKRIVVQVVNRFGYRWVLVATTLGLSLVT. The helical transmembrane segment at 342 to 362 threads the bilayer; sequence LLFMTTALLGWYYVLPFVLFL. Over 363–395 the chain is Cytoplasmic; sequence QGMVNSTRFSSMNTLTLKDLPDNLASSGNSLLS. Residues 396–416 form a helical membrane-spanning segment; sequence MIMQLSMSIGVTIAGLLLGLF. Over 417–430 the chain is Periplasmic; it reads GSQHVSVDSGTTQT. The chain crosses the membrane as a helical span at residues 431-451; it reads VFMYTWLSMAFIIALPAFVFA. Topologically, residues 452-471 are cytoplasmic; it reads RVPSDTHQNVAISRRKRSAQ.

The protein belongs to the major facilitator superfamily. TCR/Tet family.

It is found in the cell inner membrane. The chain is Putative multidrug resistance protein MdtD from Escherichia coli O81 (strain ED1a).